The primary structure comprises 590 residues: MKRTNYAGNITEEYLNQTITVKGWVAKRRNLGGLIFIDLRDREGIVQIVVNPETAATEVAEAADKARNEFVLEVTGKVVERASKNDKIKTGGIEIEATAIEILSTSKTTPFEIKDDVEVLDDTRLKYRYLDLRRPEMLKNITMRHATTRSIREYLDGAGFIDVETPFLNKSTPEGARDYLVPSRVNKGEFYALPQSPQLMKQLLMTAGLDRYYQIVKCFRDEDLRGDRQPEFTQVDLETSFLGEEEIQELTEELIAKVMKDVKGIDVTLPFPRMNYDDAMNFYGSDKPDTRFELLLTDLSALAKTVDFKVFQEAEVVKAIVVKGAADKYSRKSIDKLTEQAKQNGAKGLAWVKFEKGEFAGGVSKFLAESTDSFVNELKLTDNDLVLFVADSLDVANSALGALRLTIGKQQGLIDFRKFNFLWVIDWPMFEWSDEEERYMSAHHPFTLPTKETQAFLSADGHRKDSDLKKVRAHAYDIVLNGYELGGGSLRINSRDLQEEMLSALGFKLEDANEQFGFLLEALDYGFPPHGGLALGLDRFVMLLAGKDNIREVIAFPKNNKASDPMTQAPSIVADKQLEELSIKLANKDQ.

E174 contributes to the L-aspartate binding site. An aspartate region spans residues 198–201 (QLMK). Position 220 (R220) interacts with L-aspartate. ATP-binding positions include 220–222 (RDE) and Q229. H443 provides a ligand contact to L-aspartate. Position 484 (E484) interacts with ATP. R491 serves as a coordination point for L-aspartate. Position 536–539 (536–539 (GLDR)) interacts with ATP.

The protein belongs to the class-II aminoacyl-tRNA synthetase family. Type 1 subfamily. As to quaternary structure, homodimer.

Its subcellular location is the cytoplasm. It catalyses the reaction tRNA(Asp) + L-aspartate + ATP = L-aspartyl-tRNA(Asp) + AMP + diphosphate. Functionally, catalyzes the attachment of L-aspartate to tRNA(Asp) in a two-step reaction: L-aspartate is first activated by ATP to form Asp-AMP and then transferred to the acceptor end of tRNA(Asp). In Lactococcus lactis subsp. cremoris (strain MG1363), this protein is Aspartate--tRNA ligase.